The chain runs to 447 residues: Signal recognition particle 54 kDa protein (447 aa).

Residues 103–110 (GVQGSGKT), 185–189 (DTAGR), and 245–248 (TKMD) each bind GTP.

Belongs to the GTP-binding SRP family. SRP54 subfamily. In terms of assembly, part of the signal recognition particle protein translocation system, which is composed of SRP and FtsY. Archaeal SRP consists of a 7S RNA molecule of 300 nucleotides and two protein subunits: SRP54 and SRP19.

Its subcellular location is the cytoplasm. The enzyme catalyses GTP + H2O = GDP + phosphate + H(+). Involved in targeting and insertion of nascent membrane proteins into the cytoplasmic membrane. Binds to the hydrophobic signal sequence of the ribosome-nascent chain (RNC) as it emerges from the ribosomes. The SRP-RNC complex is then targeted to the cytoplasmic membrane where it interacts with the SRP receptor FtsY. In Saccharolobus solfataricus (strain ATCC 35092 / DSM 1617 / JCM 11322 / P2) (Sulfolobus solfataricus), this protein is Signal recognition particle 54 kDa protein.